We begin with the raw amino-acid sequence, 319 residues long: Annexin A4 (319 aa).

Residue T7 is modified to Phosphothreonine. S12 is modified (phosphoserine). Annexin repeat units follow at residues 14-85 (FNAT…GLMT), 86-157 (PTVL…SLSA), 169-241 (ALMK…AIVK), and 245-316 (SKPS…VLCG). K213, K293, and K300 each carry N6-acetyllysine.

It belongs to the annexin family.

The protein localises to the zymogen granule membrane. In terms of biological role, calcium/phospholipid-binding protein which promotes membrane fusion and is involved in exocytosis. This is Annexin A4 (Anxa4) from Mus musculus (Mouse).